A 692-amino-acid chain; its full sequence is Elongation factor G (692 aa).

A tr-type G domain is found at 8–282 (ERTRNIGIMA…AIVDYLPAPT (275 aa)). Residues 17–24 (AHIDAGKT), 81–85 (DTPGH), and 135–138 (NKMD) each bind GTP.

Belongs to the TRAFAC class translation factor GTPase superfamily. Classic translation factor GTPase family. EF-G/EF-2 subfamily.

The protein localises to the cytoplasm. Its function is as follows. Catalyzes the GTP-dependent ribosomal translocation step during translation elongation. During this step, the ribosome changes from the pre-translocational (PRE) to the post-translocational (POST) state as the newly formed A-site-bound peptidyl-tRNA and P-site-bound deacylated tRNA move to the P and E sites, respectively. Catalyzes the coordinated movement of the two tRNA molecules, the mRNA and conformational changes in the ribosome. The polypeptide is Elongation factor G (Desulforamulus reducens (strain ATCC BAA-1160 / DSM 100696 / MI-1) (Desulfotomaculum reducens)).